Consider the following 356-residue polypeptide: Cyclin-D1-binding protein 1 (356 aa).

The residue at position 2 (A2) is an N-acetylalanine. 2 interaction with TCF3 regions span residues 2-181 (ASST…VDFV) and 147-356 (ISCN…AAEL). Residues 2–187 (ASSTAAVPFL…VDFVKDAHEE (186 aa)) are interaction with RPLP0. The interval 2–205 (ASSTAAVPFL…DPYSGLLNDS (204 aa)) is required for interaction with CCND1. The segment at 198-224 (YSGLLNDSEDNSDSHSDEDGVLGLPSN) is disordered. The interval 236–356 (LIIPCLALVR…KALTQRAAEL (121 aa)) is interaction with RPLP0.

It belongs to the CCNDBP1 family. Interacts with CCND1 and GRAP2. May also interact with COPS5, RPLP0, SIRT6, SYF2 and TCF3. Post-translationally, phosphorylated. Expressed at high levels in brain, intestine, muscle and ovary and at lower levels in heart, kidney, liver, lung, spleen and testis.

It localises to the cytoplasm. Its subcellular location is the nucleus. Functionally, may negatively regulate cell cycle progression. May act at least in part via inhibition of the cyclin-D1/CDK4 complex, thereby preventing phosphorylation of RB1 and blocking E2F-dependent transcription. May be required for hepatocyte proliferation. This is Cyclin-D1-binding protein 1 (Ccndbp1) from Mus musculus (Mouse).